The sequence spans 137 residues: Actin-depolymerizing factor 2 (137 aa).

The 133-residue stretch at 5–137 folds into the ADF-H domain; it reads ASGMAVHDDC…GLDVFKSRTN (133 aa). Serine 6 carries the phosphoserine modification.

It belongs to the actin-binding proteins ADF family. As to quaternary structure, interacts with AIP1-1.

It localises to the cytoplasm. The protein localises to the cytoskeleton. Actin-depolymerizing protein. Severs actin filaments (F-actin) and binds to actin monomers. Required for normal cell growth, plant development, cell organ expansion and flowering. Essential for root-knot nematode infection. The polypeptide is Actin-depolymerizing factor 2 (ADF2) (Arabidopsis thaliana (Mouse-ear cress)).